Consider the following 1045-residue polypeptide: E3 ubiquitin-protein ligase Topors (1045 aa).

The segment at 1–35 (MGSQPPLGSPLSREEGEAPPPAPASEGRRRSRRVR) is disordered. The segment at 1-195 (MGSQPPLGSP…RERNASVYSP (195 aa)) is E3 ubiquitin-protein ligase activity. The required for DNA-binding stretch occupies residues 51–374 (ELAASAPARP…MAAFDQHANY (324 aa)). Glycyl lysine isopeptide (Lys-Gly) (interchain with G-Cter in SUMO2) cross-links involve residues Lys-73, Lys-76, Lys-83, and Lys-88. Ser-98 bears the Phosphoserine mark. The RING-type zinc finger occupies 103-142 (CPICLDRFDNVSYLDRCLHKFCFRCVQEWSKNKAECPLCK). Residue Lys-159 forms a Glycyl lysine isopeptide (Lys-Gly) (interchain with G-Cter in SUMO2) linkage. Ser-194 is subject to Phosphoserine. Residue Lys-249 forms a Glycyl lysine isopeptide (Lys-Gly) (interchain with G-Cter in SUMO2) linkage. Residues 437 to 574 (SLLNTSDSSD…STSLSSPRNL (138 aa)) form a required for sumoylation and localization to discrete nuclear foci region. The interval 437 to 654 (SLLNTSDSSD…RSRTRDSSWS (218 aa)) is interaction with SUMO1. Residues 442-475 (SDSSDEELVTGGATSQIQGVQTNDDLNNDSDDSS) form a disordered region. Polar residues predominate over residues 453–463 (GATSQIQGVQT). The tract at residues 456–731 (SQIQGVQTND…RRTLSRAHYS (276 aa)) is interaction with p53/TP53. Residues 456–882 (SQIQGVQTND…GKATDTTKHH (427 aa)) are interaction with TOP1. At Ser-499 the chain carries Phosphoserine. The interval 511–692 (ETVKTQEQEQ…RSRNRDRYYL (182 aa)) is disordered. Residues 521-534 (SYSSGDSDVSRCSS) are compositionally biased toward low complexity. The segment covering 539-565 (LGKDEQINKGHCDSSTRIKSKKEEKRS) has biased composition (basic and acidic residues). Lys-560 is covalently cross-linked (Glycyl lysine isopeptide (Lys-Gly) (interchain with G-Cter in SUMO)). Positions 566 to 578 (TSLSSPRNLNSSV) are enriched in polar residues. Residue Ser-585 is modified to Phosphoserine. Basic residues-rich tracts occupy residues 588 to 597 (NHRHRKRGRS), 613 to 630 (KNHR…KRSR), and 637 to 647 (PRGRRDKKRSR). Positions 654-669 (SRRSQTLSLSSESTSR) are enriched in low complexity. Lys-701 participates in a covalent cross-link: Glycyl lysine isopeptide (Lys-Gly) (interchain with G-Cter in SUMO2). The tract at residues 713 to 936 (RDGYESSYRR…DNSGPQDPLQ (224 aa)) is disordered. Ser-718 is modified (phosphoserine; by PLK1). Positions 721–730 (RRRTLSRAHY) are enriched in basic residues. The span at 731–747 (SRQSSSPEFRVQSFSER) shows a compositional bias: polar residues. Ser-734 is subject to Phosphoserine. Basic and acidic residues-rich tracts occupy residues 755–766 (NHSERKYYYYER) and 816–825 (FASKAKDSHY). Glycyl lysine isopeptide (Lys-Gly) (interchain with G-Cter in SUMO2) cross-links involve residues Lys-819 and Lys-837. Residues 854 to 863 (KHKRRKRKTR) are compositionally biased toward basic residues. Residues 854 to 917 (KHKRRKRKTR…ITIDSDSDKD (64 aa)) form an interaction with UBE2I region. A phosphoserine mark is found at Ser-864 and Ser-866. Residues 880-897 (KHHKKKKKKHKKKHKKHH) show a composition bias toward basic residues. Ser-912, Ser-914, and Ser-1028 each carry phosphoserine. Over residues 913 to 923 (DSDKDSEVKED) the composition is skewed to basic and acidic residues.

Interacts with PARK7/DJ-1. Interacts with TOP1. Interacts with p53/TP53; can both ubiquitinate and sumoylate p53/TP53. Interacts with the SUMO1 conjugating enzyme UBE2I. Interacts with SUMO1. Interacts with NKX3-1; polyubiquitinates NKX3-1 and induces its proteasomal degradation. Interacts with SIN3A; sumoylates SIN3A. Interacts with IKBKE; induced by DNA damage. In terms of processing, phosphorylation at Ser-98 regulates the E3 ubiquitin-protein ligase activity but not the SUMO1-protein ligase activity. Phosphorylation at Ser-718 increases the E3 ubiquitin-protein ligase activity versus the SUMO1-protein ligase activity resulting in increased p53/TP53 ubiquitination and degradation. Post-translationally, sumoylated. As to expression, expressed at highest levels in testis and at lower levels in adrenal gland, bone marrow, brain, colon, heart, kidney, liver, muscle, ovary, pancreas, placenta, prostate, skeletal muscle, skin, small intestine, spleen, stomach, testis, thymus, thyroid and uterus. Expressed in the alveolar epithelium of the lung. Expression is commonly decreased in colon adenocarcinomas and lung cancers.

The protein resides in the nucleus. The protein localises to the PML body. It catalyses the reaction S-ubiquitinyl-[E2 ubiquitin-conjugating enzyme]-L-cysteine + [acceptor protein]-L-lysine = [E2 ubiquitin-conjugating enzyme]-L-cysteine + N(6)-ubiquitinyl-[acceptor protein]-L-lysine.. Its function is as follows. Functions as an E3 ubiquitin-protein ligase and as an E3 SUMO1-protein ligase. Probable tumor suppressor involved in cell growth, cell proliferation and apoptosis that regulates p53/TP53 stability through ubiquitin-dependent degradation. May regulate chromatin modification through sumoylation of several chromatin modification-associated proteins. May be involved in DNA damage-induced cell death through IKBKE sumoylation. The protein is E3 ubiquitin-protein ligase Topors (TOPORS) of Homo sapiens (Human).